We begin with the raw amino-acid sequence, 324 residues long: MYG1 protein C694.04c (324 aa).

The protein belongs to the MYG1 family.

This Schizosaccharomyces pombe (strain 972 / ATCC 24843) (Fission yeast) protein is MYG1 protein C694.04c.